The primary structure comprises 90 residues: U7-theraphotoxin-Hhn1a 2 (90 aa).

The signal sequence occupies residues 1–19; sequence MKIAIFTVVLALAVFAVLS. A propeptide spanning residues 20 to 50 is cleaved from the precursor; the sequence is FGWEANEKALSEEFTELIHEKEAASETEARE. Intrachain disulfides connect C51–C65, C58–C70, and C64–C81.

It belongs to the neurotoxin 10 (Hwtx-1) family. 13 (Hntx-13) subfamily. In terms of tissue distribution, expressed by the venom gland.

It localises to the secreted. Functionally, ion channel inhibitor. The polypeptide is U7-theraphotoxin-Hhn1a 2 (Cyriopagopus hainanus (Chinese bird spider)).